The following is a 213-amino-acid chain: uncharacterized protein (213 aa).

An N-terminal signal peptide occupies residues 1–21; sequence MKKILFLTVICFCLSSIKAYA.

This is an uncharacterized protein from Rickettsia prowazekii (strain Madrid E).